Reading from the N-terminus, the 535-residue chain is Probable serine/threonine protein phosphatase 2A regulatory subunit B''delta (535 aa).

The segment at serine 67–arginine 104 is disordered. EF-hand domains are found at residues valine 174 to leucine 209 and serine 387 to arginine 422. Residues aspartate 400, aspartate 402, asparagine 404, and glutamate 411 each coordinate Ca(2+).

PP2A consists of a common heterodimeric core enzyme, composed of a 36 kDa catalytic subunit (subunit C) and a 65 kDa constant regulatory subunit (PR65 or subunit A), that associates with a variety of regulatory subunits. Proteins that associate with the core dimer include three families of regulatory subunits B (the R2/B/PR55/B55, R3/B''/PR72/PR130/PR59 and R5/B'/B56 families) and cell signaling molecules.

In terms of biological role, probable regulatory subunit of type 2A protein phosphatase. In Arabidopsis thaliana (Mouse-ear cress), this protein is Probable serine/threonine protein phosphatase 2A regulatory subunit B''delta (B''DELTA).